Consider the following 116-residue polypeptide: Flagellar hook-basal body complex protein FliE (116 aa).

This sequence belongs to the FliE family.

Its subcellular location is the bacterial flagellum basal body. The chain is Flagellar hook-basal body complex protein FliE from Rhizobium rhizogenes (strain K84 / ATCC BAA-868) (Agrobacterium radiobacter).